We begin with the raw amino-acid sequence, 169 residues long: Ribosome maturation factor RimM (169 aa).

The region spanning 92–166 is the PRC barrel domain; the sequence is NKEYYWNDIF…IVIDLTNLNN (75 aa).

This sequence belongs to the RimM family. As to quaternary structure, binds ribosomal protein uS19.

It localises to the cytoplasm. In terms of biological role, an accessory protein needed during the final step in the assembly of 30S ribosomal subunit, possibly for assembly of the head region. Essential for efficient processing of 16S rRNA. May be needed both before and after RbfA during the maturation of 16S rRNA. It has affinity for free ribosomal 30S subunits but not for 70S ribosomes. This chain is Ribosome maturation factor RimM, found in Buchnera aphidicola subsp. Cinara cedri (strain Cc).